A 263-amino-acid chain; its full sequence is MRSFLYLIVVIFLFSSSVNACDRCLHRSKASYFSSASALSSGACAYGPMATSFFAGHIAAAIPSIYKDGAGCGACFQVRCKNPKLCNSKGTIVMVTDLNTSNQTDLVLSSRAFRAMAKPVVGVDKYLLKQGIVDVEYQRVPCNYGKRNLNVRVEEASKKPNYLAIKLLYQGGQTEVVGIDIAPVGSSQWSYMSRSHGAVWATDKVPTGALQFKFTVTGGYDGKTVWSKRVLPANWNSGRIYDAGVQITDIAQEGCDTCGHIWN.

The signal sequence occupies residues 1–20 (MRSFLYLIVVIFLFSSSVNA). Residues 41 to 147 (SGACAYGPMA…QRVPCNYGKR (107 aa)) form the Expansin-like EG45 domain. Asparagine 99 and asparagine 102 each carry an N-linked (GlcNAc...) asparagine glycan. One can recognise an Expansin-like CBD domain in the interval 161 to 243 (NYLAIKLLYQ…NWNSGRIYDA (83 aa)).

The protein belongs to the expansin family. Expansin-like A subfamily.

The protein localises to the secreted. In Arabidopsis thaliana (Mouse-ear cress), this protein is Expansin-like A3 (EXLA3).